Consider the following 173-residue polypeptide: NADH-ubiquinone oxidoreductase chain 6 (173 aa).

Transmembrane regions (helical) follow at residues 1-21, 27-47, 48-68, 87-107, and 139-159; these read MTYF…AVAS, YGVV…LSLG, VSFV…VVFV, VVGY…VGGL, and CGVG…FVVL.

This sequence belongs to the complex I subunit 6 family.

The protein resides in the mitochondrion membrane. The catalysed reaction is a ubiquinone + NADH + 5 H(+)(in) = a ubiquinol + NAD(+) + 4 H(+)(out). Functionally, core subunit of the mitochondrial membrane respiratory chain NADH dehydrogenase (Complex I) that is believed to belong to the minimal assembly required for catalysis. Complex I functions in the transfer of electrons from NADH to the respiratory chain. The immediate electron acceptor for the enzyme is believed to be ubiquinone. In Synthliboramphus wumizusume (Japanese murrelet), this protein is NADH-ubiquinone oxidoreductase chain 6 (MT-ND6).